The following is a 113-amino-acid chain: Nucleoid-associated protein Syncc9605_0027 (113 aa).

The protein belongs to the YbaB/EbfC family. In terms of assembly, homodimer.

It is found in the cytoplasm. It localises to the nucleoid. In terms of biological role, binds to DNA and alters its conformation. May be involved in regulation of gene expression, nucleoid organization and DNA protection. This chain is Nucleoid-associated protein Syncc9605_0027, found in Synechococcus sp. (strain CC9605).